A 295-amino-acid chain; its full sequence is Giardin subunit alpha-1 (295 aa).

4 Annexin repeats span residues 2–71 (PKVT…MDLF), 73–143 (DRHE…MEKW), 153–223 (GSPE…AHFA), and 226–293 (GMHR…TLWR).

Belongs to the annexin family. Giardin subunit alpha subfamily.

It localises to the cytoplasm. Its subcellular location is the cytoskeleton. Giardins are involved in parasite attachment to the intestinal mucosa and in the cytoskeletal disassembly and reassembly that marks the transition from infectious trophozoite to transmissible cyst. They may interact with other cytoskeletal proteins such as microtubules in the microribbons or crossbridges, to maintain the integrity of the ventral disk. This is Giardin subunit alpha-1 from Giardia intestinalis (Giardia lamblia).